An 82-amino-acid chain; its full sequence is RNA-binding protein YbxF (82 aa).

This sequence belongs to the eukaryotic ribosomal protein eL8 family.

In Geobacillus stearothermophilus (Bacillus stearothermophilus), this protein is RNA-binding protein YbxF.